A 158-amino-acid polypeptide reads, in one-letter code: Eukaryotic translation initiation factor 5A (158 aa).

At Lys51 the chain carries Hypusine.

Belongs to the eIF-5A family. Lys-51 undergoes hypusination, a unique post-translational modification that consists in the addition of a butylamino group from spermidine to lysine side chain, leading to the formation of the unusual amino acid hypusine. eIF-5As are the only known proteins to undergo this modification, which is essential for their function.

It localises to the cytoplasm. Its function is as follows. Translation factor that promotes translation elongation and termination, particularly upon ribosome stalling at specific amino acid sequence contexts. Binds between the exit (E) and peptidyl (P) site of the ribosome and promotes rescue of stalled ribosome: specifically required for efficient translation of polyproline-containing peptides as well as other motifs that stall the ribosome. Acts as a ribosome quality control (RQC) cofactor by joining the RQC complex to facilitate peptidyl transfer during CAT tailing step. The chain is Eukaryotic translation initiation factor 5A (ANB1) from Candida albicans (strain SC5314 / ATCC MYA-2876) (Yeast).